We begin with the raw amino-acid sequence, 584 residues long: Interferon regulatory factor 2-binding protein 1 (584 aa).

The interval 60–127 (VLPEGRSPGP…SGRLPLPSPA (68 aa)) is disordered. Ser-66 and Ser-125 each carry phosphoserine. Arg-177 carries the omega-N-methylarginine modification. Phosphoserine is present on Ser-186. The stretch at 197–217 (EKEKQQRNADCLAELNEAMRG) forms a coiled coil. Lys-227 participates in a covalent cross-link: Glycyl lysine isopeptide (Lys-Gly) (interchain with G-Cter in SUMO2). The interval 346 to 420 (PAEALPQQYP…PYSAETPGVP (75 aa)) is disordered. Pro residues predominate over residues 354–369 (YPEPAPAALCGPPPRA). 4 positions are modified to phosphoserine: Ser-371, Ser-384, Ser-421, and Ser-436. The tract at residues 433-495 (LGHSPKDPGG…VSGGGSGTGA (63 aa)) is disordered. Lys-438 is covalently cross-linked (Glycyl lysine isopeptide (Lys-Gly) (interchain with G-Cter in SUMO2)). Over residues 449–463 (AGGASPAASSTAQPP) the composition is skewed to low complexity. Phosphoserine occurs at positions 453 and 457. Residues 503–550 (CTLCRERLEDTHFVQCPSVPGHKFCFPCSREFIKAQGPAGEVYCPSGD) form an RING-type; degenerate zinc finger. The interval 503 to 550 (CTLCRERLEDTHFVQCPSVPGHKFCFPCSREFIKAQGPAGEVYCPSGD) is cys-rich.

This sequence belongs to the IRF2BP family. Interacts with IRF2. Part of a corepressor complex containing IRF2 and IRF2BP2. Interacts with JDP2.

It localises to the nucleus. It catalyses the reaction S-ubiquitinyl-[E2 ubiquitin-conjugating enzyme]-L-cysteine + [acceptor protein]-L-lysine = [E2 ubiquitin-conjugating enzyme]-L-cysteine + N(6)-ubiquitinyl-[acceptor protein]-L-lysine.. Acts as a transcriptional corepressor in a IRF2-dependent manner; this repression is not mediated by histone deacetylase activities. May act as an E3 ligase towards JDP2, enhancing its polyubiquitination. Represses ATF2-dependent transcriptional activation. This is Interferon regulatory factor 2-binding protein 1 (IRF2BP1) from Homo sapiens (Human).